Here is a 228-residue protein sequence, read N- to C-terminus: Serum amyloid P-component (228 aa).

The first 20 residues, Met-1–Ala-20, serve as a signal peptide directing secretion. The region spanning Asn-25 to Asp-224 is the Pentraxin (PTX) domain. Asn-52 carries an N-linked (GlcNAc...) asparagine glycan. A disulfide bridge connects residues Cys-56 and Cys-115. Ca(2+)-binding residues include Asp-78, Asn-79, Glu-156, Gln-157, Asp-158, and Gln-168.

The protein belongs to the pentraxin family. Homopentamer. Pentraxin (or pentaxin) have a discoid arrangement of 5 non-covalently bound subunits. It depends on Ca(2+) as a cofactor.

It localises to the secreted. The sequence is that of Serum amyloid P-component (Apcs) from Rattus norvegicus (Rat).